The sequence spans 59 residues: MFTLKKSLLLLFFLGTINFSLCEEERNAEEERRDYPEERDVEVEKRIIPLPLGYFAKKT.

Positions 1-22 are cleaved as a signal peptide; that stretch reads MFTLKKSLLLLFFLGTINFSLC. Positions 23 to 44 are excised as a propeptide; sequence EEERNAEEERRDYPEERDVEVE.

The protein belongs to the frog skin active peptide (FSAP) family. Brevinin subfamily. Expressed by the skin glands.

The protein localises to the secreted. In terms of biological role, antimicrobial peptide. Has activity against the Gram-positive bacterium S.aureus (MIC=6 uM) and the Gram-negative bacterium E.coli (MIC=3 uM). Lacks hemolytic activity against human erythrocytes. The polypeptide is Dybowskin-1CDYa (Rana dybowskii (Dybovsky's frog)).